The chain runs to 248 residues: Probable septum site-determining protein MinC (248 aa).

The interval 94 to 126 (GMPPAMRGGQPAADFEAPAGEPQANPGAPEPQI) is disordered.

Belongs to the MinC family. As to quaternary structure, interacts with MinD and FtsZ.

Cell division inhibitor that blocks the formation of polar Z ring septums. Rapidly oscillates between the poles of the cell to destabilize FtsZ filaments that have formed before they mature into polar Z rings. Prevents FtsZ polymerization. In Brucella suis biovar 1 (strain 1330), this protein is Probable septum site-determining protein MinC.